A 176-amino-acid chain; its full sequence is Inner membrane assembly complex subunit 17 (176 aa).

The N-terminal 28 residues, 1-28 (MLRVLPTSFKSISTRSAFRACQLSPLTV), are a transit peptide targeting the mitochondrion. Over 29-98 (YCPLKSSQGT…MSQEVSLKRF (70 aa)) the chain is Mitochondrial matrix. The helical transmembrane segment at 99–121 (VRPLWVFFLMSSTVYLILHYVWW) threads the bilayer. The Mitochondrial intermembrane segment spans residues 122–176 (KLEVVEKEKELQSHVESLEMELDQTLKSQNQNVSSSQNNGNNKTNDKPWYRKWFF). Residues 123–151 (LEVVEKEKELQSHVESLEMELDQTLKSQN) adopt a coiled-coil conformation. Residues 149–163 (SQNQNVSSSQNNGNN) are compositionally biased toward low complexity. Residues 149-168 (SQNQNVSSSQNNGNNKTNDK) form a disordered region.

Belongs to the INA17 family. Component of the inner membrane assembly (INA) complex, composed of INA17 and INA22. Interacts with a subset of F(1)F(0)-ATP synthase subunits of the F(1)-domain and the peripheral stalk.

It localises to the mitochondrion inner membrane. Component of the INA complex (INAC) that promotes the biogenesis of mitochondrial F(1)F(0)-ATP synthase. INAC facilitates the assembly of the peripheral stalk and promotes the assembly of the catalytic F(1)-domain with the membrane-embedded F(0)-domain. The chain is Inner membrane assembly complex subunit 17 from Zygosaccharomyces rouxii (strain ATCC 2623 / CBS 732 / NBRC 1130 / NCYC 568 / NRRL Y-229).